Consider the following 218-residue polypeptide: Protease PrsW (218 aa).

A helical membrane pass occupies residues 1 to 23 (MFAIISAGIAPGIALLSYFYLKD). Residues 24–30 (QYDNEPV) lie on the Cytoplasmic side of the membrane. A helical transmembrane segment spans residues 31–53 (HMVLRSFFLGVVLVFPIMFIQYV). Residues 54–98 (LEKENVGGGSFFVSFLSSGFLEESLKWFILMISVYPHAHFDEHYD) lie on the Extracellular side of the membrane. Residues 99–121 (GIVYGASVSLGFATLENILYLIG) form a helical membrane-spanning segment. At 122–129 (HGVEHAFV) the chain is on the cytoplasmic side. A helical membrane pass occupies residues 130-151 (RALLPVSCHALIGVIMGFYLGK). The Extracellular segment spans residues 152–180 (ARFSADKARVKWLTLSLVVPSLLHGSYDF). A helical transmembrane segment spans residues 181–203 (ILTALSNWIYYMLPFMVFLWWFG). Residues 204 to 218 (LRKAKKARSVNMMQV) are Cytoplasmic-facing.

This sequence belongs to the protease PrsW family.

Its subcellular location is the cell membrane. Functionally, involved in the degradation of anti-sigma-W factor RsiW. Responsible for Site-1 cleavage of the RsiW anti-sigma factor. This results, after two other proteolytic steps catalyzed by the RasP and ClpXP proteases, in the release of SigW and the transcription activation of the genes under the control of the sigma-W factor. Seems to be responsible for sensing antimicrobial peptides that damage the cell membrane and other agents that cause cell envelope stress. Therefore it is a protease governing regulated intramembrane proteolysis and resistance to antimicrobial peptides in B.subtilis. This is Protease PrsW from Bacillus subtilis (strain 168).